Consider the following 186-residue polypeptide: Ribosome-recycling factor (186 aa).

It belongs to the RRF family.

Its subcellular location is the cytoplasm. Functionally, responsible for the release of ribosomes from messenger RNA at the termination of protein biosynthesis. May increase the efficiency of translation by recycling ribosomes from one round of translation to another. The polypeptide is Ribosome-recycling factor (Rickettsia peacockii (strain Rustic)).